Reading from the N-terminus, the 297-residue chain is Ribosomal RNA small subunit methyltransferase H (297 aa).

Residues 35–37 (GGH), D55, F82, D100, and Q107 each bind S-adenosyl-L-methionine.

This sequence belongs to the methyltransferase superfamily. RsmH family.

The protein localises to the cytoplasm. It carries out the reaction cytidine(1402) in 16S rRNA + S-adenosyl-L-methionine = N(4)-methylcytidine(1402) in 16S rRNA + S-adenosyl-L-homocysteine + H(+). Its function is as follows. Specifically methylates the N4 position of cytidine in position 1402 (C1402) of 16S rRNA. This chain is Ribosomal RNA small subunit methyltransferase H, found in Chlamydia caviae (strain ATCC VR-813 / DSM 19441 / 03DC25 / GPIC) (Chlamydophila caviae).